The following is a 256-amino-acid chain: 6-carboxyhexanoate--CoA ligase (256 aa).

Belongs to the BioW family. As to quaternary structure, homodimer. Mg(2+) serves as cofactor.

The catalysed reaction is heptanedioate + ATP + CoA = 6-carboxyhexanoyl-CoA + AMP + diphosphate. It functions in the pathway metabolic intermediate metabolism; pimeloyl-CoA biosynthesis; pimeloyl-CoA from pimelate: step 1/1. Functionally, catalyzes the transformation of pimelate into pimeloyl-CoA with concomitant hydrolysis of ATP to AMP. This is 6-carboxyhexanoate--CoA ligase from Bacillus amyloliquefaciens (strain ATCC 23350 / DSM 7 / BCRC 11601 / CCUG 28519 / NBRC 15535 / NRRL B-14393 / F).